We begin with the raw amino-acid sequence, 461 residues long: Glucan endo-1,3-beta-glucosidase (461 aa).

The signal sequence occupies residues 1–23 (MPLLILLMLLAAGAAGAESATPS). The active-site Proton donor is the Glu-123. The active-site Nucleophile is the Glu-265. The interval 350 to 375 (GASVAPTPSPNPSPNPSPKPAPSGGG) is disordered. Pro residues predominate over residues 356–370 (TPSPNPSPNPSPKPA). Residues Cys-378 and Cys-439 are joined by a disulfide bond.

This sequence belongs to the glycosyl hydrolase 17 family. Contains two additional disulfide bonds.

It carries out the reaction Hydrolysis of (1-&gt;3)-beta-D-glucosidic linkages in (1-&gt;3)-beta-D-glucans.. Functionally, is thought to be an important plant defense-related product against fungal pathogens. The protein is Glucan endo-1,3-beta-glucosidase (GLC1) of Triticum aestivum (Wheat).